The following is a 504-amino-acid chain: Melianol synthase CYP71BQ5 (504 aa).

Residues 2–22 traverse the membrane as a helical segment; sequence EFRLPSLPVFLSFLLFFLMLV. Cys442 contributes to the heme binding site.

It belongs to the cytochrome P450 family. The cofactor is heme. As to expression, mainly expressed in fruits and leaves.

Its subcellular location is the membrane. It carries out the reaction dihydroniloticin + 2 reduced [NADPH--hemoprotein reductase] + 2 O2 = melianol + 2 oxidized [NADPH--hemoprotein reductase] + 3 H2O + 2 H(+). Its pathway is secondary metabolite biosynthesis; terpenoid biosynthesis. Functionally, monooxygenase involved in the biosynthesis of limonoids triterpene natural products such as azadirachtin, an antifeedant widely used as bioinsecticide, and possessing many medicinal applications including anti-tumoral, anti-malarial, anti-rheumatic, antibacterial, anti-inflammatory, anti-pyretic and diuretic effects. Catalyzes the conversion of dihydroniloticin to the protolimonoid melianol. This chain is Melianol synthase CYP71BQ5, found in Azadirachta indica (Neem tree).